A 1053-amino-acid chain; its full sequence is MNKIYLILILFTFVGIILANVEKAEVSCTCDENCNDGNKCTLDKCNNGCCSNTPININDNDECTVDTCNPKTGISHTPVNCDDGNSCTADSCLCGKGCQHVPIACDDNNACTVDSCSNSTGCCHTPLSCDDNNPCTVDSCSNSTGCCHTPINVDDHNACTEDKCTQSGGVTHTPIACDDKNACTVDSCSNSTGCCHTPLSCDDNNACTVDSCSNSTGCVHTPINVDDHNACTEDKCTQSGGVTHTPIACDDKNACTADSCSNSTGCCHTPITCDDNNACTVDSCSNSTGCCHTPINVDDNNACTEDKCTQSGGVTHTPIACDDKNACTVDSCSNSTGCVHTPLACDDKNPCTVDSCSNSTGCCHTPINVDDNNACTEDKCTQSGGVTHTPINCDDNNKCTVDSCSNSTGCCHTPMSCDDNNPCTVDSCSNSTGCVHTPINVDDNNACTEDKCTQNGGVTHTPIACDDKNACTVDSCSNSTGCCHTPLKCDDNNACTVDSCSNSTGCVHTPINVDDNNACTEDKCTQSGGVTHTPISCDDKNPCTIDSCSNSTGCVHTPMSCDDRNPCTSDFCSWEKGCQHVALSCNDFNACTMDSCSNSTGCTHTPIACDDKNACTVDSCSNSTGCVHTPLTCDDNNPCTVDSCSNSTGCCHTPINVDDHNACTEDKCTQSGGVTHTPIACDDKNACTVDSCSNSTGCCHTPLSCDDNNACTVDSCSNSTGCVHTPINVDDNNACTEDKCTQNGGVTHTPIACDDKNACTVDSCSNSTGCCHTPLKCDDNNPCTVDSCSNSTGCVHTPMNVDDNNACTEDKCTQNGGVTHTPIRCDDLNSCTADSCSNSTGCVHTPINCDDNNKCTADSCSNSTGCCHTPISCDDNNPCTVDSCSNSTGCCHTPINVDDNNPCTEDKCTQSGGVTHTPIGCNDNNACTVDSCSNSTGCTHTPMKCDDNNPCTIDSCSNSTGCVHTPMNCDDGNFCTLDSCCSTGCTHTPIIIDDNNPCTVDSCCNSTGVVHTPVDCNDNNVLTCDYCSIKQGGKCIHVPMTQCKTFGKCGDDL.

The N-terminal stretch at 1–18 is a signal peptide; sequence MNKIYLILILFTFVGIIL. An X-1 repeat occupies 38 to 60; the sequence is NKCTLDKCNNGCCSNTPININDN. The 41 X 24 AA tandem repeats, Cys-rich stretch occupies residues 38-1019; sequence NKCTLDKCNN…VHTPVDCNDN (982 aa). The X-2 repeat unit spans residues 61–84; it reads DECTVDTCNPKTGISHTPVNCDDG. The X-3 repeat unit spans residues 85–108; the sequence is NSCTADSCLCGKGCQHVPIACDDN. Residues 109–132 form an A-1 repeat; that stretch reads NACTVDSCSNSTGCCHTPLSCDDN. One copy of the A-2 repeat lies at 133–156; the sequence is NPCTVDSCSNSTGCCHTPINVDDH. Residues 157-180 form a B-1 repeat; sequence NACTEDKCTQSGGVTHTPIACDDK. An A-3 repeat occupies 181-204; sequence NACTVDSCSNSTGCCHTPLSCDDN. The stretch at 205–228 is one A-4 repeat; sequence NACTVDSCSNSTGCVHTPINVDDH. One copy of the B-2 repeat lies at 229–252; it reads NACTEDKCTQSGGVTHTPIACDDK. One copy of the A-5 repeat lies at 253–276; it reads NACTADSCSNSTGCCHTPITCDDN. One copy of the A-6 repeat lies at 277–300; it reads NACTVDSCSNSTGCCHTPINVDDN. The stretch at 301 to 324 is one B-3 repeat; sequence NACTEDKCTQSGGVTHTPIACDDK. One copy of the A-7 repeat lies at 325-348; sequence NACTVDSCSNSTGCVHTPLACDDK. The stretch at 349–372 is one A-8 repeat; sequence NPCTVDSCSNSTGCCHTPINVDDN. The stretch at 373–396 is one B-4 repeat; it reads NACTEDKCTQSGGVTHTPINCDDN. Residues 397–420 form an A-9 repeat; that stretch reads NKCTVDSCSNSTGCCHTPMSCDDN. An A-10 repeat occupies 421-444; sequence NPCTVDSCSNSTGCVHTPINVDDN. The B-5 repeat unit spans residues 445 to 468; it reads NACTEDKCTQNGGVTHTPIACDDK. Residues 469 to 492 form an A-11 repeat; the sequence is NACTVDSCSNSTGCCHTPLKCDDN. One copy of the A-12 repeat lies at 493–516; that stretch reads NACTVDSCSNSTGCVHTPINVDDN. Residues 517–540 form a B-6 repeat; sequence NACTEDKCTQSGGVTHTPISCDDK. Residues 541–564 form an A-13 repeat; it reads NPCTIDSCSNSTGCVHTPMSCDDR. Residues 565–588 form an X-4 repeat; that stretch reads NPCTSDFCSWEKGCQHVALSCNDF. The A-14 repeat unit spans residues 589–612; it reads NACTMDSCSNSTGCTHTPIACDDK. An A-15 repeat occupies 613–636; sequence NACTVDSCSNSTGCVHTPLTCDDN. An A-16 repeat occupies 637–660; that stretch reads NPCTVDSCSNSTGCCHTPINVDDH. One copy of the B-7 repeat lies at 661-684; that stretch reads NACTEDKCTQSGGVTHTPIACDDK. The A-17 repeat unit spans residues 685–708; it reads NACTVDSCSNSTGCCHTPLSCDDN. One copy of the A-18 repeat lies at 709–732; it reads NACTVDSCSNSTGCVHTPINVDDN. Residues 733–756 form a B-8 repeat; the sequence is NACTEDKCTQNGGVTHTPIACDDK. Residues 757-780 form an A-19 repeat; sequence NACTVDSCSNSTGCCHTPLKCDDN. The stretch at 781 to 804 is one A-20 repeat; it reads NPCTVDSCSNSTGCVHTPMNVDDN. A B-9 repeat occupies 805–828; the sequence is NACTEDKCTQNGGVTHTPIRCDDL. Residues 829-852 form an A-21 repeat; it reads NSCTADSCSNSTGCVHTPINCDDN. The stretch at 853–876 is one A-22 repeat; the sequence is NKCTADSCSNSTGCCHTPISCDDN. The stretch at 877 to 900 is one A-23 repeat; that stretch reads NPCTVDSCSNSTGCCHTPINVDDN. The stretch at 901–924 is one B-10 repeat; sequence NPCTEDKCTQSGGVTHTPIGCNDN. Residues 925 to 948 form an A-24 repeat; it reads NACTVDSCSNSTGCTHTPMKCDDN. The A-25 repeat unit spans residues 949–971; sequence NPCTIDSCSNSTGCVHTPMNCDD. The A-26 repeat unit spans residues 972–995; that stretch reads GNFCTLDSCCSTGCTHTPIIIDDN. The stretch at 996–1019 is one A-27 repeat; sequence NPCTVDSCCNSTGVVHTPVDCNDN.

Its subcellular location is the secreted. It is found in the extracellular space. It localises to the extracellular matrix. Its function is as follows. Component of the stalk tube, the matrix that encases stalk cells. This chain is Prestalk protein (ecmB), found in Dictyostelium discoideum (Social amoeba).